We begin with the raw amino-acid sequence, 309 residues long: MDISEGNKTLVTEFVLTGLTDRPWLHVLFFVVFLVVYLITMVGNLGLIVLIWNDPHLHMPMYLFLGGLAFSDACTSTSITPRMLVNFLDKTAMISLAECITQFYFFASSATTECFLLVMMAYDRYVAICNPLLYPVMMSNKLSAQLLSISYVIGFLHPLVHVSLLLRLTFCRFNIIHYFYCEILQLFKISCNGPSINALMIFIFGAFIQIPTLMTIIISYTRVLFDILKKKSEKGRSKAFSTCGAHLLSVSLYYGTLIFMYVRPASGLAEDQDKVYSLFYTIIIPLLNPFIYSLRNKKVMHALRRVIRK.

Over 1-27 the chain is Extracellular; that stretch reads MDISEGNKTLVTEFVLTGLTDRPWLHV. N-linked (GlcNAc...) asparagine glycosylation occurs at Asn7. A helical transmembrane segment spans residues 28 to 48; that stretch reads LFFVVFLVVYLITMVGNLGLI. Residues 49 to 56 lie on the Cytoplasmic side of the membrane; sequence VLIWNDPH. Residues 57 to 77 traverse the membrane as a helical segment; sequence LHMPMYLFLGGLAFSDACTST. Residues 78–101 lie on the Extracellular side of the membrane; the sequence is SITPRMLVNFLDKTAMISLAECIT. Residues Cys99 and Cys191 are joined by a disulfide bond. Residues 102–122 traverse the membrane as a helical segment; it reads QFYFFASSATTECFLLVMMAY. At 123 to 135 the chain is on the cytoplasmic side; sequence DRYVAICNPLLYP. Residues 136 to 156 form a helical membrane-spanning segment; that stretch reads VMMSNKLSAQLLSISYVIGFL. The Extracellular segment spans residues 157–198; that stretch reads HPLVHVSLLLRLTFCRFNIIHYFYCEILQLFKISCNGPSINA. Residues 199 to 219 form a helical membrane-spanning segment; it reads LMIFIFGAFIQIPTLMTIIIS. At 220–239 the chain is on the cytoplasmic side; the sequence is YTRVLFDILKKKSEKGRSKA. The chain crosses the membrane as a helical span at residues 240 to 260; sequence FSTCGAHLLSVSLYYGTLIFM. The Extracellular segment spans residues 261–273; the sequence is YVRPASGLAEDQD. A helical transmembrane segment spans residues 274–294; sequence KVYSLFYTIIIPLLNPFIYSL. Topologically, residues 295-309 are cytoplasmic; sequence RNKKVMHALRRVIRK.

The protein belongs to the G-protein coupled receptor 1 family.

The protein localises to the cell membrane. Functionally, odorant receptor. The sequence is that of Olfactory receptor 5AC2 (OR5AC2) from Homo sapiens (Human).